The following is a 116-amino-acid chain: DNA-binding protein Tpen_0471 (116 aa).

Belongs to the PDCD5 family.

The sequence is that of DNA-binding protein Tpen_0471 from Thermofilum pendens (strain DSM 2475 / Hrk 5).